A 116-amino-acid chain; its full sequence is Thioredoxin H-type (116 aa).

The Thioredoxin domain maps to A2–T115. Active-site nucleophile residues include C39 and C42. A disulfide bridge connects residues C39 and C42.

The protein belongs to the thioredoxin family. Plant H-type subfamily.

The protein resides in the cytoplasm. In terms of biological role, participates in various redox reactions through the reversible oxidation of the active center dithiol to a disulfide. The H form is known to activate a number of cytosolic enzymes. The chain is Thioredoxin H-type from Fagopyrum esculentum (Common buckwheat).